The primary structure comprises 432 residues: Probable D-serine dehydratase (432 aa).

N6-(pyridoxal phosphate)lysine is present on K112.

The protein belongs to the serine/threonine dehydratase family. DsdA subfamily. Pyridoxal 5'-phosphate is required as a cofactor.

It carries out the reaction D-serine = pyruvate + NH4(+). The protein is Probable D-serine dehydratase of Pediococcus pentosaceus (strain ATCC 25745 / CCUG 21536 / LMG 10740 / 183-1w).